Consider the following 317-residue polypeptide: Ribosomal RNA small subunit methyltransferase H (317 aa).

S-adenosyl-L-methionine contacts are provided by residues 37–39 (AGH), Asp56, Phe85, Asp106, and Gln113.

Belongs to the methyltransferase superfamily. RsmH family.

Its subcellular location is the cytoplasm. The enzyme catalyses cytidine(1402) in 16S rRNA + S-adenosyl-L-methionine = N(4)-methylcytidine(1402) in 16S rRNA + S-adenosyl-L-homocysteine + H(+). Functionally, specifically methylates the N4 position of cytidine in position 1402 (C1402) of 16S rRNA. The protein is Ribosomal RNA small subunit methyltransferase H of Lactococcus lactis subsp. cremoris (strain SK11).